A 1956-amino-acid chain; its full sequence is Sodium channel protein type 10 subunit alpha (1956 aa).

Topologically, residues M1–K125 are cytoplasmic. The interval H31–Q54 is disordered. Positions R32–H41 are enriched in basic residues. A compositionally biased stretch (basic and acidic residues) spans R42–Q54. An I repeat occupies F116–Q404. A helical transmembrane segment spans residues V126–R149. At T150–E154 the chain is on the extracellular side. Residues K155–A174 form a helical membrane-spanning segment. Topologically, residues R175–D187 are cytoplasmic. The chain crosses the membrane as a helical span at residues P188 to I206. The Extracellular portion of the chain corresponds to D207–S212. The chain crosses the membrane as a helical; Voltage-sensor span at residues G213–L232. The Cytoplasmic segment spans residues K233 to D248. A helical membrane pass occupies residues V249 to L272. At K273–S340 the chain is on the extracellular side. Residues C276 and C318 are joined by a disulfide bond. N-linked (GlcNAc...) asparagine glycans are attached at residues N279, N288, N311, and N334. An intramembrane region (pore-forming) is located at residues F341–L365. Over R366–Y372 the chain is Extracellular. A helical transmembrane segment spans residues M373 to A398. The Cytoplasmic segment spans residues Y399–F658. Phosphoserine occurs at positions 440, 443, 466, and 478. The span at L441–N453 shows a compositional bias: polar residues. Disordered stretches follow at residues L441 to R484 and L537 to P581. Polar residues predominate over residues S475–R484. 2 positions are modified to phosphoserine: S611 and S614. An II repeat occupies C646–Q910. Residues E659 to M683 form a helical membrane-spanning segment. Over E684–A694 the chain is Extracellular. Residues M695–F718 form a helical membrane-spanning segment. Topologically, residues D719–K726 are cytoplasmic. A helical transmembrane segment spans residues K727–S746. The Extracellular segment spans residues K747–S752. A helical; Voltage-sensor transmembrane segment spans residues V753 to L772. Residues N773–N788 are Cytoplasmic-facing. Residues L789 to S809 form a helical membrane-spanning segment. Over E810 to D833 the chain is Extracellular. An intramembrane region (pore-forming) is located at residues F834–W854. Topologically, residues V855–S863 are extracellular. C856 and C865 are joined by a disulfide. The chain crosses the membrane as a helical span at residues I864–L889. The Cytoplasmic segment spans residues N890–R1148. Positions D1008–D1094 are disordered. An III repeat occupies Q1141–L1450. Residues I1149–F1172 traverse the membrane as a helical segment. Residues E1173–S1185 lie on the Extracellular side of the membrane. A helical transmembrane segment spans residues V1186–F1211. Topologically, residues K1212–N1217 are cytoplasmic. The chain crosses the membrane as a helical span at residues A1218–L1239. Residues E1240–D1243 lie on the Extracellular side of the membrane. Residues V1244–F1265 form a helical; Voltage-sensor membrane-spanning segment. Residues E1266 to N1284 are Cytoplasmic-facing. The chain crosses the membrane as a helical span at residues V1285 to V1312. Residues D1313–V1354 are Extracellular-facing. N-linked (GlcNAc...) asparagine glycosylation is found at N1323, N1329, and N1337. The segment at residues A1355–A1376 is an intramembrane region (pore-forming). Over A1377–N1392 the chain is Extracellular. Residues L1393–I1419 form a helical membrane-spanning segment. The Cytoplasmic segment spans residues D1420 to D1472. At S1452 the chain carries Phosphoserine; by PKC. The stretch at I1459–Q1758 is one IV repeat. The chain crosses the membrane as a helical span at residues I1473 to V1496. The Extracellular portion of the chain corresponds to E1497–K1507. The helical transmembrane segment at V1508 to L1531 threads the bilayer. Residues R1532–T1537 lie on the Cytoplasmic side of the membrane. The helical transmembrane segment at N1538 to L1561 threads the bilayer. At K1562–F1573 the chain is on the extracellular side. A helical; Voltage-sensor membrane pass occupies residues R1574–R1595. Residues T1596–N1610 lie on the Cytoplasmic side of the membrane. A helical transmembrane segment spans residues I1611–V1633. Over V1634–T1647 the chain is Extracellular. Positions F1648–P1670 form an intramembrane region, pore-forming. The Extracellular segment spans residues I1671–V1698. N1687 carries N-linked (GlcNAc...) asparagine glycosylation. A helical membrane pass occupies residues G1699–L1723. Residues E1724–Q1956 are Cytoplasmic-facing. The IQ domain maps to E1852–P1881. A disordered region spans residues D1906–Q1956. Over residues A1931 to Q1940 the composition is skewed to polar residues.

Belongs to the sodium channel (TC 1.A.1.10) family. Nav1.8/SCN10A subfamily. The channel consists of an ion conducting pore forming alpha-subunit regulated by one or more associated auxiliary subunits SCN1B, SCN2B and SCN3B; electrophysiological properties may vary depending on the type of the associated beta subunits. Found in a number of complexes with PRX, DYNLT1 and PDZD2. Interacts with proteins such as FSTL1, PRX, DYNLT1, PDZD2, S100A10 and many others. Interacts with NEDD4 and NEDD4L. Ubiquitinated by NEDD4L; which promotes its endocytosis. In terms of processing, phosphorylation at Ser-1452 by PKC in a highly conserved cytoplasmic loop slows inactivation of the sodium channel and reduces peak sodium currents. Post-translationally, lacks the cysteine which covalently binds the conotoxin GVIIJ. This cysteine (position 815) is speculated in other sodium channel subunits alpha to be implied in covalent binding with the sodium channel subunit beta-2 or beta-4. Expressed in dorsal root ganglia, trigeminal ganglia, nodose ganglia and sciatic nerve.

It is found in the cell membrane. It carries out the reaction Na(+)(in) = Na(+)(out). Tetrodotoxin-resistant channel that mediates the voltage-dependent sodium ion permeability of excitable membranes. Assuming opened or closed conformations in response to the voltage difference across the membrane, the protein forms a sodium-selective channel through which sodium ions may pass in accordance with their electrochemical gradient. Plays a role in neuropathic pain mechanisms. The protein is Sodium channel protein type 10 subunit alpha of Rattus norvegicus (Rat).